The primary structure comprises 472 residues: 2-methylcitrate synthase, mitochondrial (472 aa).

A mitochondrion-targeting transit peptide spans 1 to 29; the sequence is MALNLTTSRRALGSLKPLTRAAFVGARGY. Residues Arg75 and Lys193 each contribute to the CoA site. Residue His271 coordinates oxaloacetate. Leu306 serves as a coordination point for CoA. His307 is an active-site residue. Residues Val348, Gly350, and Tyr351 each coordinate CoA. 2 residues coordinate oxaloacetate: His353 and Arg362. Residue His353 is part of the active site. 3 residues coordinate CoA: Thr402, Lys403, and Asn408. Asp410 is a catalytic residue. Arg436 and Arg456 together coordinate oxaloacetate.

It belongs to the citrate synthase family. In terms of assembly, homodimer.

It localises to the mitochondrion matrix. It catalyses the reaction propanoyl-CoA + oxaloacetate + H2O = (2S,3S)-2-methylcitrate + CoA + H(+). The catalysed reaction is oxaloacetate + acetyl-CoA + H2O = citrate + CoA + H(+). It functions in the pathway organic acid metabolism; propanoate degradation. Its function is as follows. Component of the methylcitrate cycle that catalyzes the synthesis of (2S,3S)-2-methylcitrate from propionyl-CoA and oxaloacetate. Plays an important role in detoxification of propionyl-CoA, an inhibitor of both primary and secondary metabolism. Also has citrate synthase activity using as substrates acetyl-CoA and oxaloacetate. The sequence is that of 2-methylcitrate synthase, mitochondrial from Fusarium solani (Filamentous fungus).